The chain runs to 1026 residues: MRFFALFIYRPVATILIAAAITLCGILGFRLLPVAPLPQVDFPVIMVSASLPGASPETMASSVATPLERSLGRIAGVNEMTSSSSLGSTRIILEFNFDRDINGAARDVQAAINAAQSLLPGGMPSRPTYRKANPSDAPIMILTLTSESWSQGKLYDFASTQLAQTIAQIDGVGDVDVGGSSLPAVRVGLNPQALFNQGVSLDEVREAIDSANVRRPQGAIEDSVHRWQIQTNDELKTAAEYQPLIIHYNNGAAVRLGDVASVTDSVQDVRNAGMTNAKPAILLMIRKLPEANIIQTVDGIRAKLPELRAMIPAAIDLQIAQDRSPTIRASLQEVEETLAISVALVILVVFLFLRSGRATLIPAVAVPVSLIGTFAAMYLCGFSLNNLSLMALTIATGFVVDDAIVVLENIARHLEAGMKPLQAALQGTREVGFTVISMSLSLVAVFLPLLLMGGLPGRLLREFAVTLSVAIGISLVVSLTLTPMMCGWMLKSSKPRTQPRKRGVGRLLVALQQGYGTSLKWVLNHTRLVGVVFLGTVALNIWLYIAIPKTFFPEQDTGVLMGGIQADQSISFQAMRGKLQDFMKIIRDDPAVNNVTGFTGGSRVNSGMMFITLKPRGERKETAQQIIDRLRVKQAKEPGARLFLMAVQDIRVGGRQANASYQYTLLSDSLAALREWEPKIRKALSALPQLADVNSDQQDNGAEMNLIYDRDTMSRLGIDVQAANSLLNNAFGQRQISTIYQPMNQYKVVMEVDPRYSQDISALEKMFVINRDGKAIPLSYFAQWRPANAPLSVNHQGLSAASTIAFNLPTGTSLSQATEAINRTMTQLGVPSTVRGSFSGTAQVFQQTMNSQLILIVAAIATVYIVLGILYESYVHPLTILSTLPSAGVGALLALELFNAPFSLIALIGIMLLIGIVKKNAIMMVDFALEAQRSGGLTPEQAIFQACLLRFRPIMMTTLAALFGALPLVLSGGDGSELRQPLGITIVGGLVMSQLLTLYTTPVVYLFFDRLRLRFSRKNSKPVVEI.

The next 11 helical transmembrane spans lie at 15–35 (ILIA…LPVA), 333–353 (EVEE…FLFL), 360–380 (LIPA…MYLC), 387–407 (LSLM…IVVL), 431–451 (VGFT…PLLL), 463–483 (FAVT…TLTP), 528–548 (LVGV…IAIP), 853–873 (LILI…LYES), 897–917 (LFNA…IGIV), 953–973 (PIMM…LSGG), and 984–1004 (ITIV…TPVV).

It belongs to the resistance-nodulation-cell division (RND) (TC 2.A.6) family. MdtC subfamily. As to quaternary structure, part of a tripartite efflux system composed of MdtA, MdtB and MdtC. MdtC forms a heteromultimer with MdtB.

It localises to the cell inner membrane. The sequence is that of Multidrug resistance protein MdtC from Salmonella dublin (strain CT_02021853).